Here is a 183-residue protein sequence, read N- to C-terminus: Ribosome maturation factor RimM (183 aa).

A PRC barrel domain is found at 102–183 (DDDFYWHQLE…CITVDWDPEF (82 aa)).

Belongs to the RimM family. Binds ribosomal protein uS19.

It localises to the cytoplasm. An accessory protein needed during the final step in the assembly of 30S ribosomal subunit, possibly for assembly of the head region. Essential for efficient processing of 16S rRNA. May be needed both before and after RbfA during the maturation of 16S rRNA. It has affinity for free ribosomal 30S subunits but not for 70S ribosomes. The chain is Ribosome maturation factor RimM from Saccharophagus degradans (strain 2-40 / ATCC 43961 / DSM 17024).